We begin with the raw amino-acid sequence, 1351 residues long: Bromodomain-containing protein 4A (1351 aa).

7 disordered regions span residues 1 to 23, 35 to 58, 168 to 244, 285 to 368, 478 to 638, 700 to 799, and 821 to 1334; these read MSSE…GIEG, PQPQ…QPKR, ETEL…RPPA, AAQP…DTKT, EPEE…PMSY, CLRK…LDSS, and PDLP…PSID. The region spanning 58–164 is the Bromo 1 domain; that stretch reads RQTNQLQYLL…KLFLQKISEM (107 aa). Positions 208–219 are enriched in low complexity; sequence VKPPVTPVSKPS. Pro residues predominate over residues 220-235; that stretch reads TPTPPTVTRAPTPPQT. Basic and acidic residues predominate over residues 327-343; the sequence is PRKENGRQIRPTKKTEV. A compositionally biased stretch (pro residues) spans 349–359; that stretch reads PAPPVLHPQPA. The region spanning 366 to 475 is the Bromo 2 domain; it reads TKTSEQLRYC…DVFEMRFAKM (110 aa). The segment covering 482 to 504 has biased composition (pro residues); the sequence is APAPVPSLAPGPPAPSIKGPPPT. The NPS region stretch occupies residues 504 to 522; it reads TSSDSSSDSTSDSESSSDS. The span at 505–517 shows a compositional bias: low complexity; sequence SSDSSSDSTSDSE. The interval 543-598 is BID region; that stretch reads QLAALSQPQPNKPKKKEREKRKEKHKRKEEVEEPRKGRIREPPAKKPKKSVQGSGG. Positions 554 to 569 are enriched in basic residues; that stretch reads KPKKKEREKRKEKHKR. Over residues 570–586 the composition is skewed to basic and acidic residues; the sequence is KEEVEEPRKGRIREPPA. The segment covering 607-621 has biased composition (pro residues); the sequence is PPPAPRPARPAPPSA. Residues 624 to 708 form the NET domain; that stretch reads ESSEEETQRC…SCLRKKRKSQ (85 aa). Basic and acidic residues predominate over residues 629-638; that stretch reads ETQRCRPMSY. Over residues 725-738 the composition is skewed to low complexity; the sequence is SSSESESSSESSTS. The span at 751-767 shows a compositional bias: basic residues; sequence QKKKGHSGRESRKHHHP. Residues 788 to 799 show a composition bias toward low complexity; it reads PSYPLPSSLDSS. Residues 872–890 are compositionally biased toward pro residues; that stretch reads PAMPPSASPPPPAPQPPQQ. Basic residues predominate over residues 892–902; that stretch reads HVHHHHHHHAQ. Polar residues predominate over residues 927–953; that stretch reads LQKSQQPPTQSPIHSLLTSVKVQSQTP. Residues 968–983 are compositionally biased toward pro residues; it reads VYPPPPSTATTAPPPA. Composition is skewed to low complexity over residues 994–1003 and 1011–1028; these read PVVPQQLPAG and QQQQ…SHQQ. The interval 1051 to 1350 is C-terminal (CTD) region; sequence RQQKQETYPG…LMEIFEQNLF (300 aa). The segment covering 1075 to 1089 has biased composition (pro residues); sequence PPVPPYPGLTHPPSP. Basic and acidic residues-rich tracts occupy residues 1150–1161 and 1176–1197; these read PRPDLKKMDGGR and PEKE…DIKI. Polar residues predominate over residues 1214-1224; it reads PTSAGKSTSDS. Over residues 1226–1284 the composition is skewed to basic and acidic residues; sequence ELFRRQAREKEERERALKLQAEQAERVRREQDRMSRTREDDEVQDQARKAHEEARRRQE. Residues 1301 to 1310 are compositionally biased toward low complexity; that stretch reads SPAQSSQPMM. A compositionally biased stretch (basic and acidic residues) spans 1311–1323; sequence DQREMARKREQER.

This sequence belongs to the BET family.

It localises to the nucleus. The protein localises to the chromosome. Chromatin reader protein that recognizes and binds acetylated histones and plays a key role in transmission of epigenetic memory across cell divisions and transcription regulation. Remains associated with acetylated chromatin throughout the entire cell cycle and provides epigenetic memory for postmitotic G1 gene transcription by preserving acetylated chromatin status and maintaining high-order chromatin structure. During interphase, plays a key role in regulating the transcription of signal-inducible genes by associating with the P-TEFb complex and recruiting it to promoters. This chain is Bromodomain-containing protein 4A (brd4-a), found in Xenopus laevis (African clawed frog).